The primary structure comprises 441 residues: Probable cytosolic Fe-S cluster assembly factor v1g210509 (441 aa).

Positions 24, 72, 75, 78, 196, 252, and 401 each coordinate [4Fe-4S] cluster.

It belongs to the NARF family.

Component of the cytosolic iron-sulfur (Fe/S) protein assembly machinery. Required for maturation of extramitochondrial Fe/S proteins. The polypeptide is Probable cytosolic Fe-S cluster assembly factor v1g210509 (Nematostella vectensis (Starlet sea anemone)).